The chain runs to 85 residues: Large ribosomal subunit protein bL27 (85 aa).

Residues 1 to 20 (MATKKAGGSTRNGRDSEAKR) are disordered.

The protein belongs to the bacterial ribosomal protein bL27 family.

In Actinobacillus succinogenes (strain ATCC 55618 / DSM 22257 / CCUG 43843 / 130Z), this protein is Large ribosomal subunit protein bL27.